Reading from the N-terminus, the 248-residue chain is Methionine aminopeptidase (248 aa).

His77 provides a ligand contact to substrate. Residues Asp94, Asp105, and His169 each contribute to the a divalent metal cation site. A substrate-binding site is contributed by His176. A divalent metal cation is bound by residues Glu202 and Glu233.

Belongs to the peptidase M24A family. Methionine aminopeptidase type 1 subfamily. As to quaternary structure, monomer. Co(2+) serves as cofactor. It depends on Zn(2+) as a cofactor. The cofactor is Mn(2+). Fe(2+) is required as a cofactor.

The catalysed reaction is Release of N-terminal amino acids, preferentially methionine, from peptides and arylamides.. Its function is as follows. Removes the N-terminal methionine from nascent proteins. The N-terminal methionine is often cleaved when the second residue in the primary sequence is small and uncharged (Met-Ala-, Cys, Gly, Pro, Ser, Thr, or Val). Requires deformylation of the N(alpha)-formylated initiator methionine before it can be hydrolyzed. The polypeptide is Methionine aminopeptidase (Mycoplasma genitalium (strain ATCC 33530 / DSM 19775 / NCTC 10195 / G37) (Mycoplasmoides genitalium)).